Here is a 414-residue protein sequence, read N- to C-terminus: 2,3-diketo-5-methylthiopentyl-1-phosphate enolase (414 aa).

The active-site Proton acceptor is the lysine 99. Residues lysine 148, 174-177, histidine 265, glycine 338, and 360-361 each bind substrate; these read KDDE and GG. 3 residues coordinate Mg(2+): lysine 174, aspartate 176, and glutamate 177. Lysine 174 carries the N6-carboxylysine modification.

This sequence belongs to the RuBisCO large chain family. Type IV subfamily. In terms of assembly, homodimer. Mg(2+) is required as a cofactor.

It carries out the reaction 5-methylsulfanyl-2,3-dioxopentyl phosphate = 2-hydroxy-5-methylsulfanyl-3-oxopent-1-enyl phosphate. It participates in amino-acid biosynthesis; L-methionine biosynthesis via salvage pathway; L-methionine from S-methyl-5-thio-alpha-D-ribose 1-phosphate: step 3/6. Catalyzes the enolization of 2,3-diketo-5-methylthiopentyl-1-phosphate (DK-MTP-1-P) into 2-hydroxy-3-keto-5-methylthiopentenyl-1-phosphate (HK-MTPenyl-1-P). This is 2,3-diketo-5-methylthiopentyl-1-phosphate enolase from Bacillus cereus (strain ZK / E33L).